The following is a 721-amino-acid chain: Protein mu-NS (721 aa).

Positions 1–13 (MASFKGFSANTVP) are interaction with sigma-NS. The segment at 1–38 (MASFKGFSANTVPVSKTRKDTSSLTATPGLRAPSMSSP) is RNA-binding. Positions 14–40 (VSKTRKDTSSLTATPGLRAPSMSSPVD) are interaction with mu-2. Residues 17–37 (TRKDTSSLTATPGLRAPSMSS) are disordered. The involved in the formation of factory-like inclusions stretch occupies residues 471–721 (QSDTVDGIKL…IDFSVPADEL (251 aa)). Coiled coils occupy residues 523–556 (LLSQ…ADVK) and 632–686 (KQAH…NQRQ).

Belongs to the orthoreovirus mu-NS protein family. Interacts with mu-2. Interacts with sigma-NS; in viral factories. Interacts with the inner capsid proteins lambda-1 and sigma-2, and outer capsid protein lambda-2; in viral factories. The N-terminus is blocked.

It localises to the host cytoplasm. Its function is as follows. Non-structural protein implicated with protein sigma-NS in forming the matrix of viral factories, which are large inclusions in the host cytoplasm where replication intermediates are assembled and viral RNA replication takes place. Together with mu-2, recruits the other core proteins to these factories. The sequence is that of Protein mu-NS (M3) from Mammalia (T2J).